Here is a 591-residue protein sequence, read N- to C-terminus: Calnexin (591 aa).

Positions 1–20 are cleaved as a signal peptide; that stretch reads MEGKWLLCLLLVLGTAAIQA. Over 21 to 482 the chain is Lumenal; it reads HDGHDDDMID…QMLEAAEERP (462 aa). Ca(2+) contacts are provided by Ser75 and Asp118. Lys138 carries the N6-acetyllysine modification. Cysteines 161 and 195 form a disulfide. An alpha-D-glucoside contacts are provided by Tyr165, Lys167, Tyr186, and Asp193. The disordered stretch occupies residues 261 to 347; it reads GNLLNDMTPP…EKPEDWDEDM (87 aa). A compositionally biased stretch (basic and acidic residues) spans 275–320; it reads REIEDPEDRKPEDWDERPKIADPDAVKPDDWDEDAPSKIPDEEATK. The tract at residues 277–410 is p domain (Extended arm); sequence IEDPEDRKPE…RKIPNPDFFE (134 aa). Tandem repeats lie at residues 279-291, 296-308, 315-327, 334-346, and 349-359. 2 4 X approximate repeats regions span residues 279 to 346 and 349 to 406; these read DPED…WDED and GEWE…IPNP. Residues 324-347 show a composition bias toward acidic residues; it reads WLDDEPEYIPDPDAEKPEDWDEDM. Positions 327–360 are interaction with PPIB; sequence DEPEYIPDPDAEKPEDWDEDMDGEWEAPQIANPK. A disulfide bridge links Cys361 with Cys367. A run of 3 repeats spans residues 368–378, 382–392, and 396–406. An an alpha-D-glucoside-binding site is contributed by Glu426. Ca(2+) is bound at residue Asp437. A helical transmembrane segment spans residues 483–503; sequence WLWVVYILTVALPVFLVILFC. S-palmitoyl cysteine attachment occurs at residues Cys503 and Cys504. Topologically, residues 504 to 591 are cytoplasmic; sequence CSGKKQSNAM…SPRNRKPRRE (88 aa). A sufficient to mediate interaction with SGIP1 region spans residues 504 to 591; that stretch reads CSGKKQSNAM…SPRNRKPRRE (88 aa). Positions 514-538 are enriched in basic and acidic residues; the sequence is EYKKTDAPQPDVKDEEGKEEEKNKG. The interval 514–591 is disordered; the sequence is EYKKTDAPQP…SPRNRKPRRE (78 aa). Ser553 bears the Phosphoserine mark. The span at 555-568 shows a compositional bias: acidic residues; sequence AEEDGGTGSQDEED. At Thr561 the chain carries Phosphothreonine. Position 563 is a phosphoserine; by MAPK3 (Ser563). A Phosphoserine modification is found at Ser582.

It belongs to the calreticulin family. In terms of assembly, interacts with MAPK3/ERK1. Interacts with KCNH2. Associates with ribosomes. Interacts with SGIP1; involved in negative regulation of endocytosis. The palmitoylated form interacts with the ribosome-translocon complex component SSR1, promoting efficient folding of glycoproteins. Interacts with SERPINA2P/SERPINA2 and with the S and Z variants of SERPINA1. Interacts with PPIB. Interacts with ZNRF4. Interacts with SMIM22. Interacts with TMX2. Interacts with TMEM35A/NACHO and CHRNA7. Interacts with reticulophagy regulators RETREG2 and RETREG3. Interacts with DNM1L; may form part of a larger protein complex at the ER-mitochondrial interface during mitochondrial fission. Interacts with ADAM7. Post-translationally, phosphorylated at Ser-563 by MAPK3/ERK1. Phosphorylation by MAPK3/ERK1 increases its association with ribosomes. In terms of processing, palmitoylation by DHHC6 leads to the preferential localization to the perinuclear rough ER. It mediates the association of calnexin with the ribosome-translocon complex (RTC) which is required for efficient folding of glycosylated proteins. Ubiquitinated, leading to proteasomal degradation. Probably ubiquitinated by ZNRF4.

Its subcellular location is the endoplasmic reticulum membrane. The protein resides in the mitochondrion membrane. It is found in the melanosome membrane. In terms of biological role, calcium-binding protein that interacts with newly synthesized monoglucosylated glycoproteins in the endoplasmic reticulum. It may act in assisting protein assembly and/or in the retention within the ER of unassembled protein subunits. It seems to play a major role in the quality control apparatus of the ER by the retention of incorrectly folded proteins. Associated with partial T-cell antigen receptor complexes that escape the ER of immature thymocytes, it may function as a signaling complex regulating thymocyte maturation. Additionally it may play a role in receptor-mediated endocytosis at the synapse. The polypeptide is Calnexin (Canx) (Rattus norvegicus (Rat)).